The primary structure comprises 160 residues: Cytochrome b6-f complex subunit 4 (160 aa).

The next 3 membrane-spanning stretches (helical) occupy residues 36 to 56 (LLYVFPVVIMGTIGLVVGLAV), 95 to 115 (LLGIACQAAIPLGLMLIPFIE), and 131 to 151 (TFFMIGTLVTLWLGAGAIFPI).

The protein belongs to the cytochrome b family. PetD subfamily. As to quaternary structure, the 4 large subunits of the cytochrome b6-f complex are cytochrome b6, subunit IV (17 kDa polypeptide, PetD), cytochrome f and the Rieske protein, while the 4 small subunits are PetG, PetL, PetM and PetN. The complex functions as a dimer.

It is found in the cellular thylakoid membrane. Component of the cytochrome b6-f complex, which mediates electron transfer between photosystem II (PSII) and photosystem I (PSI), cyclic electron flow around PSI, and state transitions. The sequence is that of Cytochrome b6-f complex subunit 4 from Gloeothece citriformis (strain PCC 7424) (Cyanothece sp. (strain PCC 7424)).